We begin with the raw amino-acid sequence, 357 residues long: Holliday junction branch migration complex subunit RuvB (357 aa).

Residues 1–27 (MGRFSNADGPGDDADEREVTPALTVGE) are disordered. Residues 1–195 (MGRFSNADGP…FGFTAHMDFY (195 aa)) form a large ATPase domain (RuvB-L) region. Residues leucine 34, arginine 35, glycine 76, lysine 79, threonine 80, serine 81, 142 to 144 (EDF), arginine 185, tyrosine 195, and arginine 232 each bind ATP. Threonine 80 contributes to the Mg(2+) binding site. A small ATPAse domain (RuvB-S) region spans residues 196-266 (EPAELERVLA…IAKYALEVYD (71 aa)). Positions 269-357 (ELGLDRLDRA…GGLGQVGLFE (89 aa)) are head domain (RuvB-H). DNA is bound by residues arginine 324 and arginine 329.

Belongs to the RuvB family. In terms of assembly, homohexamer. Forms an RuvA(8)-RuvB(12)-Holliday junction (HJ) complex. HJ DNA is sandwiched between 2 RuvA tetramers; dsDNA enters through RuvA and exits via RuvB. An RuvB hexamer assembles on each DNA strand where it exits the tetramer. Each RuvB hexamer is contacted by two RuvA subunits (via domain III) on 2 adjacent RuvB subunits; this complex drives branch migration. In the full resolvosome a probable DNA-RuvA(4)-RuvB(12)-RuvC(2) complex forms which resolves the HJ.

Its subcellular location is the cytoplasm. It carries out the reaction ATP + H2O = ADP + phosphate + H(+). Functionally, the RuvA-RuvB-RuvC complex processes Holliday junction (HJ) DNA during genetic recombination and DNA repair, while the RuvA-RuvB complex plays an important role in the rescue of blocked DNA replication forks via replication fork reversal (RFR). RuvA specifically binds to HJ cruciform DNA, conferring on it an open structure. The RuvB hexamer acts as an ATP-dependent pump, pulling dsDNA into and through the RuvAB complex. RuvB forms 2 homohexamers on either side of HJ DNA bound by 1 or 2 RuvA tetramers; 4 subunits per hexamer contact DNA at a time. Coordinated motions by a converter formed by DNA-disengaged RuvB subunits stimulates ATP hydrolysis and nucleotide exchange. Immobilization of the converter enables RuvB to convert the ATP-contained energy into a lever motion, pulling 2 nucleotides of DNA out of the RuvA tetramer per ATP hydrolyzed, thus driving DNA branch migration. The RuvB motors rotate together with the DNA substrate, which together with the progressing nucleotide cycle form the mechanistic basis for DNA recombination by continuous HJ branch migration. Branch migration allows RuvC to scan DNA until it finds its consensus sequence, where it cleaves and resolves cruciform DNA. The polypeptide is Holliday junction branch migration complex subunit RuvB (Mycolicibacterium gilvum (strain PYR-GCK) (Mycobacterium gilvum (strain PYR-GCK))).